The chain runs to 883 residues: Valine--tRNA ligase (883 aa).

The 'HIGH' region motif lies at 46-56; the sequence is PNVTGKLHLGH. The short motif at 520–524 is the 'KMSKS' region element; the sequence is KMSKS. ATP is bound at residue lysine 523. The stretch at 809-844 forms a coiled coil; it reads LVDLLNVEEELARLEKELAKWQKELDMVGKKLSNER.

The protein belongs to the class-I aminoacyl-tRNA synthetase family. ValS type 1 subfamily. As to quaternary structure, monomer.

It is found in the cytoplasm. It carries out the reaction tRNA(Val) + L-valine + ATP = L-valyl-tRNA(Val) + AMP + diphosphate. Catalyzes the attachment of valine to tRNA(Val). As ValRS can inadvertently accommodate and process structurally similar amino acids such as threonine, to avoid such errors, it has a 'posttransfer' editing activity that hydrolyzes mischarged Thr-tRNA(Val) in a tRNA-dependent manner. The chain is Valine--tRNA ligase from Streptococcus pneumoniae (strain ATCC BAA-255 / R6).